The following is a 326-amino-acid chain: Pyruvate dehydrogenase E1 component subunit beta (326 aa).

E60 lines the thiamine diphosphate pocket. I113, A161, I162, and N166 together coordinate K(+).

Heterodimer of an alpha and a beta chain. Thiamine diphosphate serves as cofactor.

It is found in the plastid. Its subcellular location is the chloroplast. It catalyses the reaction N(6)-[(R)-lipoyl]-L-lysyl-[protein] + pyruvate + H(+) = N(6)-[(R)-S(8)-acetyldihydrolipoyl]-L-lysyl-[protein] + CO2. Functionally, the pyruvate dehydrogenase complex catalyzes the overall conversion of pyruvate to acetyl-CoA and CO(2). It contains multiple copies of three enzymatic components: pyruvate dehydrogenase (E1), dihydrolipoamide acetyltransferase (E2) and lipoamide dehydrogenase (E3). The sequence is that of Pyruvate dehydrogenase E1 component subunit beta (pdhB) from Chaetosphaeridium globosum (Charophycean green alga).